The sequence spans 155 residues: Small ribosomal subunit protein uS9 (155 aa).

The protein belongs to the universal ribosomal protein uS9 family.

This Sinorhizobium fredii (strain NBRC 101917 / NGR234) protein is Small ribosomal subunit protein uS9.